A 205-amino-acid polypeptide reads, in one-letter code: Protein N-terminal glutamine amidohydrolase (205 aa).

Active-site residues include C20, H74, and D90.

This sequence belongs to the NTAQ1 family. In terms of assembly, monomer.

The catalysed reaction is N-terminal L-glutaminyl-[protein] + H2O = N-terminal L-glutamyl-[protein] + NH4(+). Functionally, mediates the side-chain deamidation of N-terminal glutamine residues to glutamate, an important step in N-end rule pathway of protein degradation. Conversion of the resulting N-terminal glutamine to glutamate renders the protein susceptible to arginylation, polyubiquitination and degradation as specified by the N-end rule. Does not act on substrates with internal or C-terminal glutamine and does not act on non-glutamine residues in any position. This Drosophila erecta (Fruit fly) protein is Protein N-terminal glutamine amidohydrolase (tun).